Consider the following 204-residue polypeptide: N-alpha-acetyltransferase 40 (204 aa).

The N-acetyltransferase domain occupies 39 to 202 (EIYHHLEKGL…YYILYTKSRK (164 aa)). Residues Tyr-64, 107–109 (TVE), and Tyr-118 contribute to the substrate site. Acetyl-CoA contacts are provided by residues 120–122 (IQL) and 128–133 (GRNVGK). Thr-154 is a substrate binding site. Asn-159 contacts acetyl-CoA. Ser-176 contacts substrate.

Belongs to the acetyltransferase family. NAA40 subfamily.

It is found in the cytoplasm. The protein localises to the nucleus. It catalyses the reaction N-terminal L-seryl-[histone H4] + acetyl-CoA = N-terminal N(alpha)-acetyl-L-seryl-[histone H4] + CoA + H(+). It carries out the reaction N-terminal L-seryl-[histone H2A] + acetyl-CoA = N-terminal N(alpha)-acetyl-L-seryl-[histone H2A] + CoA + H(+). Its function is as follows. N-alpha-acetyltransferase that specifically mediates the acetylation of the N-terminal residues of histones H4 and H2A. This is N-alpha-acetyltransferase 40 from Schizosaccharomyces pombe (strain 972 / ATCC 24843) (Fission yeast).